Consider the following 631-residue polypeptide: ATP-dependent RNA helicase mrh4, mitochondrial (631 aa).

A mitochondrion-targeting transit peptide spans 1–45; the sequence is MNRLGRLPLPLPPSVCLFCRFRATASLPSSLQATRSMATARLRRR. Positions 68–112 are disordered; it reads KERFGPFAGMNQTEARIRETPRARSRAAQKRSGEPEEDSQKESPL. The span at 98 to 108 shows a compositional bias: basic and acidic residues; that stretch reads RSGEPEEDSQK. Residues 141–174 carry the Q motif motif; that stretch reads TSFDQFQLLPVVRNSISSQALPGLVDVTPTPIQR. The segment covering 180–193 has biased composition (basic and acidic residues); that stretch reads LLEEPKTEKKPTKA. The tract at residues 180 to 199 is disordered; sequence LLEEPKTEKKPTKADDDEPR. Residues 194-406 enclose the Helicase ATP-binding domain; it reads DDDEPRYDQY…RKRYPDIKRL (213 aa). 207–214 provides a ligand contact to ATP; it reads AETGSGKT. The tract at residues 229 to 249 is disordered; sequence EARDKELEKKEQEEKAREREE. A DEAD box motif is present at residues 353-356; the sequence is DEAD. The 177-residue stretch at 455 to 631 folds into the Helicase C-terminal domain; that stretch reads GPYASYVAPK…EGMFRGQALI (177 aa).

This sequence belongs to the DEAD box helicase family. MRH4 subfamily.

Its subcellular location is the mitochondrion. It carries out the reaction ATP + H2O = ADP + phosphate + H(+). In terms of biological role, ATP-binding RNA helicase involved in mitochondrial RNA metabolism. Required for maintenance of mitochondrial DNA. The protein is ATP-dependent RNA helicase mrh4, mitochondrial (mrh4) of Aspergillus fumigatus (strain ATCC MYA-4609 / CBS 101355 / FGSC A1100 / Af293) (Neosartorya fumigata).